The chain runs to 65 residues: Large ribosomal subunit protein bL32 (65 aa).

It belongs to the bacterial ribosomal protein bL32 family.

The protein is Large ribosomal subunit protein bL32 of Metamycoplasma arthritidis (strain 158L3-1) (Mycoplasma arthritidis).